A 393-amino-acid polypeptide reads, in one-letter code: NAD(P)H-quinone oxidoreductase subunit H, chloroplastic (393 aa).

This sequence belongs to the complex I 49 kDa subunit family. In terms of assembly, NDH is composed of at least 16 different subunits, 5 of which are encoded in the nucleus.

The protein localises to the plastid. It is found in the chloroplast thylakoid membrane. It catalyses the reaction a plastoquinone + NADH + (n+1) H(+)(in) = a plastoquinol + NAD(+) + n H(+)(out). The catalysed reaction is a plastoquinone + NADPH + (n+1) H(+)(in) = a plastoquinol + NADP(+) + n H(+)(out). In terms of biological role, NDH shuttles electrons from NAD(P)H:plastoquinone, via FMN and iron-sulfur (Fe-S) centers, to quinones in the photosynthetic chain and possibly in a chloroplast respiratory chain. The immediate electron acceptor for the enzyme in this species is believed to be plastoquinone. Couples the redox reaction to proton translocation, and thus conserves the redox energy in a proton gradient. This Sorghum bicolor (Sorghum) protein is NAD(P)H-quinone oxidoreductase subunit H, chloroplastic.